Consider the following 69-residue polypeptide: Intrepicalcin (69 aa).

An N-terminal signal peptide occupies residues 1 to 27 (MRQNTMTIIFIVFIVTFASLTIYGAEA). Residues 28–36 (SEANFLERR) constitute a propeptide that is removed on maturation. 3 disulfide bridges follow: C39–C53, C46–C57, and C52–C68. The tract at residues 59 to 60 (RR) is essential for stimulation of [3H]ryanodine binding to RYR1.

The protein belongs to the scorpion calcin family. In terms of tissue distribution, expressed by the venom gland.

The protein resides in the secreted. This toxin stabilizes ryanodine receptor 1 (RyR1) opening in a long-lasting subconductance state (55% of the full conductance state). Furthermore, it triggers calcium release from sarcoplasmic vesicles (45.3 nM are enough to induce a sharp release, and 50% of the total calcium is released after toxin (100 nM) addition) probably by acting as a cell-penetrating peptide (CPP). In addition, it has been shown to dose-dependently stimulate ryanodine binding to RyR1 (EC(50)=17.4 nM). It also augments the bell-shaped calcium-[3H]ryanodine binding curve that is maximal at about 10 uM calcium concentration. It binds a different site as ryanodine. It acts synergistically with caffeine. In vivo, intracerebroventricular injection into mice induces neurotoxic symptoms, followed by death. This chain is Intrepicalcin, found in Thorellius intrepidus (Scorpion).